Reading from the N-terminus, the 277-residue chain is Release factor glutamine methyltransferase (277 aa).

Residues 117-121, aspartate 140, tryptophan 168, and asparagine 183 contribute to the S-adenosyl-L-methionine site; that span reads GTGTG. Substrate is bound at residue 183–186; sequence NPPY.

Belongs to the protein N5-glutamine methyltransferase family. PrmC subfamily.

The enzyme catalyses L-glutaminyl-[peptide chain release factor] + S-adenosyl-L-methionine = N(5)-methyl-L-glutaminyl-[peptide chain release factor] + S-adenosyl-L-homocysteine + H(+). Methylates the class 1 translation termination release factors RF1/PrfA and RF2/PrfB on the glutamine residue of the universally conserved GGQ motif. In Shigella flexneri, this protein is Release factor glutamine methyltransferase.